Here is a 102-residue protein sequence, read N- to C-terminus: Small ribosomal subunit protein uS10 (102 aa).

It belongs to the universal ribosomal protein uS10 family. As to quaternary structure, part of the 30S ribosomal subunit.

In terms of biological role, involved in the binding of tRNA to the ribosomes. This chain is Small ribosomal subunit protein uS10, found in Roseiflexus sp. (strain RS-1).